Consider the following 494-residue polypeptide: UDP-N-acetylmuramoyl-L-alanyl-D-glutamate--2,6-diaminopimelate ligase (494 aa).

S30 contacts UDP-N-acetyl-alpha-D-muramoyl-L-alanyl-D-glutamate. ATP is bound at residue G110–S116. UDP-N-acetyl-alpha-D-muramoyl-L-alanyl-D-glutamate is bound by residues T152–T153, S179, and R187. The residue at position 219 (K219) is an N6-carboxylysine. Residues R380, D404–R407, G456, and E460 contribute to the meso-2,6-diaminopimelate site. A Meso-diaminopimelate recognition motif motif is present at residues D404–R407.

It belongs to the MurCDEF family. MurE subfamily. Mg(2+) serves as cofactor. In terms of processing, carboxylation is probably crucial for Mg(2+) binding and, consequently, for the gamma-phosphate positioning of ATP.

Its subcellular location is the cytoplasm. The catalysed reaction is UDP-N-acetyl-alpha-D-muramoyl-L-alanyl-D-glutamate + meso-2,6-diaminopimelate + ATP = UDP-N-acetyl-alpha-D-muramoyl-L-alanyl-gamma-D-glutamyl-meso-2,6-diaminopimelate + ADP + phosphate + H(+). Its pathway is cell wall biogenesis; peptidoglycan biosynthesis. In terms of biological role, catalyzes the addition of meso-diaminopimelic acid to the nucleotide precursor UDP-N-acetylmuramoyl-L-alanyl-D-glutamate (UMAG) in the biosynthesis of bacterial cell-wall peptidoglycan. This chain is UDP-N-acetylmuramoyl-L-alanyl-D-glutamate--2,6-diaminopimelate ligase, found in Alkaliphilus metalliredigens (strain QYMF).